The chain runs to 336 residues: MDLASNLGGKIDKSDVLTAVEKYEQYHVFHGGNEEERKANYTDMVNKYYDLATSFYEYGWGESFHFAQRWKGESLRESIKRHEHFLALQLGIQPGQKVLDVGCGIGGPLREIARFSNSVVTGLNNNEYQITRGKELNRLAGVDKTCNFVKADFMKMPFPENSFDAVYAIEATCHAPDAYGCYKEIYRVLKPGQCFAAYEWCMTDAFDPDNAEHQKIKGEIEIGDGLPDIRLTTKCLEALKQAGFEVIWEKDLAKDSPVPWYLPLDKNHFSLSSFRLTAVGRFITKNMVKILEYIRLAPQGSQRVSNFLEQAAEGLVDGGRREIFTPMYFFLARKPE.

Met-1 is subject to N-acetylmethionine.

Belongs to the class I-like SAM-binding methyltransferase superfamily. Erg6/SMT family. As to expression, highly expressed in vascular tissue, mature leaves and in regions undergoing cellular expansion.

The catalysed reaction is cycloartenol + S-adenosyl-L-methionine = 24-methylenecycloartanol + S-adenosyl-L-homocysteine + H(+). It functions in the pathway steroid biosynthesis; sterol biosynthesis. Catalyzes the methyl transfer from S-adenosyl-methionine to the C-24 of cycloartenol to form 24-methylene cycloartenol. The protein is Cycloartenol-C-24-methyltransferase (SMT1) of Arabidopsis thaliana (Mouse-ear cress).